Consider the following 155-residue polypeptide: 6,7-dimethyl-8-ribityllumazine synthase (155 aa).

5-amino-6-(D-ribitylamino)uracil contacts are provided by residues Phe-23, 57–59, and 81–83; these read AFE and AVI. 86 to 87 contacts (2S)-2-hydroxy-3-oxobutyl phosphate; sequence ST. His-89 serves as the catalytic Proton donor. Phe-114 is a 5-amino-6-(D-ribitylamino)uracil binding site. Arg-128 is a binding site for (2S)-2-hydroxy-3-oxobutyl phosphate.

Belongs to the DMRL synthase family.

It carries out the reaction (2S)-2-hydroxy-3-oxobutyl phosphate + 5-amino-6-(D-ribitylamino)uracil = 6,7-dimethyl-8-(1-D-ribityl)lumazine + phosphate + 2 H2O + H(+). It participates in cofactor biosynthesis; riboflavin biosynthesis; riboflavin from 2-hydroxy-3-oxobutyl phosphate and 5-amino-6-(D-ribitylamino)uracil: step 1/2. Functionally, catalyzes the formation of 6,7-dimethyl-8-ribityllumazine by condensation of 5-amino-6-(D-ribitylamino)uracil with 3,4-dihydroxy-2-butanone 4-phosphate. This is the penultimate step in the biosynthesis of riboflavin. The protein is 6,7-dimethyl-8-ribityllumazine synthase of Geobacter metallireducens (strain ATCC 53774 / DSM 7210 / GS-15).